The primary structure comprises 398 residues: Proteasome-activating nucleotidase (398 aa).

The stretch at 18-59 forms a coiled coil; sequence IMYLKKRIRQLELQVRTLEADKERLERELSRLRMEMSRLRQP. ATP contacts are provided by residues 183-188 and His-322; that span reads GCGKTL. Positions 396–398 are docks into pockets in the proteasome alpha-ring to cause gate opening; that stretch reads MYG.

It belongs to the AAA ATPase family. Homohexamer. The hexameric complex has a two-ring architecture resembling a top hat that caps the 20S proteasome core at one or both ends. Upon ATP-binding, the C-terminus of PAN interacts with the alpha-rings of the proteasome core by binding to the intersubunit pockets.

The protein localises to the cytoplasm. In terms of biological role, ATPase which is responsible for recognizing, binding, unfolding and translocation of substrate proteins into the archaeal 20S proteasome core particle. Is essential for opening the gate of the 20S proteasome via an interaction with its C-terminus, thereby allowing substrate entry and access to the site of proteolysis. Thus, the C-termini of the proteasomal ATPase function like a 'key in a lock' to induce gate opening and therefore regulate proteolysis. Unfolding activity requires energy from ATP hydrolysis, whereas ATP binding alone promotes ATPase-20S proteasome association which triggers gate opening, and supports translocation of unfolded substrates. The sequence is that of Proteasome-activating nucleotidase from Thermococcus onnurineus (strain NA1).